Consider the following 245-residue polypeptide: MTPEGRALLLAGAAELGLELSAEHLDRFARLLVRLTEGSAQLNLTALHQERDIVLKHFVDSLTCLRGGWLDGAARVLDLGTGAGFPALPLAIVRPDLQLVALDATRKKVDFVERTARSLELNHVQPLTGRAETLGRDPAQRESYDRVVTRAVAALPILAELTLPFLRMGGFLLAQKGPIGPEELEAGTRAAQEVGGEIRAIDAFVLPVAGDARTLVVVEKTAPTPERYPRREGVPNRKPLFWRAT.

S-adenosyl-L-methionine is bound by residues glycine 80, phenylalanine 85, 103 to 105 (DAT), 131 to 132 (AE), and arginine 150.

The protein belongs to the methyltransferase superfamily. RNA methyltransferase RsmG family.

It localises to the cytoplasm. In terms of biological role, specifically methylates the N7 position of a guanine in 16S rRNA. This is Ribosomal RNA small subunit methyltransferase G from Deinococcus geothermalis (strain DSM 11300 / CIP 105573 / AG-3a).